The chain runs to 216 residues: UPF0502 protein PFL_4004 (216 aa).

Belongs to the UPF0502 family.

This is UPF0502 protein PFL_4004 from Pseudomonas fluorescens (strain ATCC BAA-477 / NRRL B-23932 / Pf-5).